Reading from the N-terminus, the 242-residue chain is Uridylate kinase (242 aa).

Position 17-20 (17-20) interacts with ATP; sequence KLSG. Residue G59 participates in UMP binding. ATP contacts are provided by G60 and R64. UMP is bound by residues D79 and 140–147; that span reads LGNPFFTT. Positions 167, 173, and 176 each coordinate ATP.

This sequence belongs to the UMP kinase family. In terms of assembly, homohexamer.

The protein localises to the cytoplasm. It carries out the reaction UMP + ATP = UDP + ADP. It functions in the pathway pyrimidine metabolism; CTP biosynthesis via de novo pathway; UDP from UMP (UMPK route): step 1/1. Its activity is regulated as follows. Inhibited by UTP. Its function is as follows. Catalyzes the reversible phosphorylation of UMP to UDP. The chain is Uridylate kinase from Buchnera aphidicola subsp. Baizongia pistaciae (strain Bp).